The primary structure comprises 332 residues: Aquaporin-7-1 (332 aa).

Over 1-66 the chain is Cytoplasmic; sequence MSGQHQITEQ…RHAIRMPMAE (66 aa). Residues 67–87 traverse the membrane as a helical segment; that stretch reads FFGVALLIIFGAGSACQVVLS. At 88–100 the chain is on the extracellular side; that stretch reads TNPNVASSDRGSF. Residues 101-121 traverse the membrane as a helical segment; it reads LSINLGWAIGIAMGAWVSGGI. The Cytoplasmic portion of the chain corresponds to 122-144; the sequence is SGGHINPAITIAMATYRGFPWRR. Positions 127-129 match the NPA 1 motif; that stretch reads NPA. The helical transmembrane segment at 145-165 threads the bilayer; the sequence is VPSYIFAQVLGGVVGAALVYA. Over 166–199 the chain is Extracellular; the sequence is NYIHAIDIFEGGRHVRTQATASLFATYALPYMTQ. A helical membrane pass occupies residues 200 to 220; it reads VSCFFSEFLATAVLSMMVLAL. Over 221–230 the chain is Cytoplasmic; it reads TDNRNGAPTN. Residues 231–251 form a helical membrane-spanning segment; it reads GLLPFALFVLFIGLGASLGME. Topologically, residues 252-283 are extracellular; the sequence is TAYALNPARDFGPRLFLAMSGYGKALFNYRSQ. The short motif at 257–259 is the NPA 2 element; that stretch reads NPA. Residues 284–304 traverse the membrane as a helical segment; the sequence is YWLWAPIIAPVLGAQAGGLLY. Residues 305–332 are Cytoplasmic-facing; the sequence is DTFLYDGDNSPIKWRRASSQECQLAEVV.

Belongs to the MIP/aquaporin (TC 1.A.8) family.

It is found in the membrane. It carries out the reaction H2O(in) = H2O(out). Its function is as follows. Water channel required to facilitate the transport of water across membranes. Does not mediate the transport carbon dioxide across the membrane. The chain is Aquaporin-7-1 from Laccaria bicolor (Bicoloured deceiver).